Consider the following 1342-residue polypeptide: DNA-directed RNA polymerase subunit beta (1342 aa).

This sequence belongs to the RNA polymerase beta chain family. The RNAP catalytic core consists of 2 alpha, 1 beta, 1 beta' and 1 omega subunit. When a sigma factor is associated with the core the holoenzyme is formed, which can initiate transcription.

It carries out the reaction RNA(n) + a ribonucleoside 5'-triphosphate = RNA(n+1) + diphosphate. In terms of biological role, DNA-dependent RNA polymerase catalyzes the transcription of DNA into RNA using the four ribonucleoside triphosphates as substrates. The protein is DNA-directed RNA polymerase subunit beta of Salmonella typhi.